Consider the following 222-residue polypeptide: Putative O-methyltransferase MAV_1364 (222 aa).

S-adenosyl-L-methionine-binding positions include Val49, Glu71, 73 to 74 (GT), Ser79, Asp97, and Ile98. Asp145 is a binding site for substrate. Asp147 is a binding site for S-adenosyl-L-methionine.

The protein belongs to the class I-like SAM-binding methyltransferase superfamily. Cation-dependent O-methyltransferase family.

This Mycobacterium avium (strain 104) protein is Putative O-methyltransferase MAV_1364.